Here is a 400-residue protein sequence, read N- to C-terminus: Keratin, type I cytoskeletal 19 (400 aa).

The tract at residues M1–N79 is head. Position 7 is an omega-N-methylarginine (R7). S14 and S22 each carry phosphoserine. An Asymmetric dimethylarginine; alternate modification is found at R24. R24 carries the post-translational modification Omega-N-methylarginine; alternate. R32 carries the post-translational modification Omega-N-methylarginine. Phosphoserine occurs at positions 35 and 40. Residues R43 and R51 each carry the omega-N-methylarginine modification. A phosphoserine mark is found at S57 and S72. Residues E80–W115 form a coil 1A region. The IF rod domain maps to E80–Y391. Residues Y116–T133 are linker 1. The segment at I134 to L225 is coil 1B. The segment at R226–I248 is linker 12. Residues D244 to H390 are necessary for interaction with PNN. Residues L249 to Q387 form a coil 2 region. The residue at position 323 (T323) is a Phosphothreonine. The rod-like helical tail stretch occupies residues E388–L400. Y391 is modified (phosphotyrosine). At S395 the chain carries Phosphoserine.

This sequence belongs to the intermediate filament family. In terms of assembly, heterotetramer of two type I and two type II keratins. Interacts with PNN and the actin-binding domain of DMD.

Its function is as follows. Involved in the organization of myofibers. Together with KRT8, helps to link the contractile apparatus to dystrophin at the costameres of striated muscle. The protein is Keratin, type I cytoskeletal 19 of Pongo abelii (Sumatran orangutan).